The following is a 318-amino-acid chain: Methionyl-tRNA formyltransferase (318 aa).

Residue 112–115 (SILP) coordinates (6S)-5,6,7,8-tetrahydrofolate.

This sequence belongs to the Fmt family.

It catalyses the reaction L-methionyl-tRNA(fMet) + (6R)-10-formyltetrahydrofolate = N-formyl-L-methionyl-tRNA(fMet) + (6S)-5,6,7,8-tetrahydrofolate + H(+). In terms of biological role, attaches a formyl group to the free amino group of methionyl-tRNA(fMet). The formyl group appears to play a dual role in the initiator identity of N-formylmethionyl-tRNA by promoting its recognition by IF2 and preventing the misappropriation of this tRNA by the elongation apparatus. This Shewanella sp. (strain ANA-3) protein is Methionyl-tRNA formyltransferase.